The chain runs to 572 residues: Sialate:O-sulfotransferase 1 (572 aa).

Residues 1–14 (MAKPFFRLQKFLRR) lie on the Cytoplasmic side of the membrane. A helical; Signal-anchor for type II membrane protein membrane pass occupies residues 15-35 (TQFLLLFLTAAYLMTGSLLLL). The Extracellular segment spans residues 36–572 (QRARVALPQA…AGLPREYVPR (537 aa)). A glycan (N-linked (GlcNAc...) asparagine) is linked at asparagine 105. WSC domains are found at residues 139–231 (RGNY…YSVG) and 242–337 (TATY…DTRC). An N-linked (GlcNAc...) asparagine glycan is attached at asparagine 254.

Belongs to the WSCD family.

The protein localises to the golgi apparatus membrane. It catalyses the reaction a ganglioside GM1b + 3'-phosphoadenylyl sulfate = an 8-O-sulfo-ganglioside GM1b + adenosine 3',5'-bisphosphate + H(+). Its function is as follows. Sialate:O-sulfotransferase which catalyzes 8-O-sulfation at the Sia-glycan level using 3'-phosphoadenosine 5'-phosphosulfate (PAPS) as a donor, forming 8-O-sulfated Sia (Sia8S)-glycans. Displays selectivity toward glycolipids such as GM1 gangliosides. This is Sialate:O-sulfotransferase 1 (Wscd1) from Mus musculus (Mouse).